The following is a 355-amino-acid chain: Heat-inducible transcription repressor HrcA (355 aa).

It belongs to the HrcA family.

Its function is as follows. Negative regulator of class I heat shock genes (grpE-dnaK-dnaJ and groELS operons). Prevents heat-shock induction of these operons. This chain is Heat-inducible transcription repressor HrcA, found in Nitratidesulfovibrio vulgaris (strain DSM 19637 / Miyazaki F) (Desulfovibrio vulgaris).